The chain runs to 98 residues: NADH-ubiquinone oxidoreductase chain 4L (98 aa).

3 consecutive transmembrane segments (helical) span residues 1–21 (MSMV…GLLV), 29–49 (SLLC…MAIL), and 61–81 (IILL…LVMV).

The protein belongs to the complex I subunit 4L family. As to quaternary structure, core subunit of respiratory chain NADH dehydrogenase (Complex I) which is composed of 45 different subunits.

Its subcellular location is the mitochondrion inner membrane. The catalysed reaction is a ubiquinone + NADH + 5 H(+)(in) = a ubiquinol + NAD(+) + 4 H(+)(out). Core subunit of the mitochondrial membrane respiratory chain NADH dehydrogenase (Complex I) which catalyzes electron transfer from NADH through the respiratory chain, using ubiquinone as an electron acceptor. Part of the enzyme membrane arm which is embedded in the lipid bilayer and involved in proton translocation. This is NADH-ubiquinone oxidoreductase chain 4L (MT-ND4L) from Lynx canadensis (Canada lynx).